Here is a 439-residue protein sequence, read N- to C-terminus: MAKITIIGAGLAGSEAAWQLAQRNIPVRLYEMRPHTMTPAHQTDHCGELVCSNSLRSDDHSNSAVGLLHQELRGLDSLIMRCADQHRVPAGGALAVDRHAFSAAITEALEQHPLIELIRQEIVTPPMEEDGYTIIASGPLTAGGLAHWIEAQVGKRMAFFDAIAPIVSHDSIDFSKAWKQSRYDKGDGNDYINCAMDEAQYHTFVQALLEGEKVAYKEFEANTPYFDGCLPIEVMAERGVETLRYGPMKPVGLTNPHKAEKSYAIVQLRQDNKLGTLWNMVGFQTKLSWPAQKRIFATIPGLEQAEFVRLGALHRNTFINSPTLLSETLQLKTQPRLLFAGQITGVEGYVESTACGLMAGRIVAHKMRGEAVSIPPQTTALGALMRHITGEADATHFQPMNVNFGLFPNFTERVPKKQRKEAYAQRALTHMQQWLQENS.

8–13 (GAGLAG) contacts FAD.

The protein belongs to the MnmG family. TrmFO subfamily. FAD is required as a cofactor.

It is found in the cytoplasm. The enzyme catalyses uridine(54) in tRNA + (6R)-5,10-methylene-5,6,7,8-tetrahydrofolate + NADH + H(+) = 5-methyluridine(54) in tRNA + (6S)-5,6,7,8-tetrahydrofolate + NAD(+). It carries out the reaction uridine(54) in tRNA + (6R)-5,10-methylene-5,6,7,8-tetrahydrofolate + NADPH + H(+) = 5-methyluridine(54) in tRNA + (6S)-5,6,7,8-tetrahydrofolate + NADP(+). In terms of biological role, catalyzes the folate-dependent formation of 5-methyl-uridine at position 54 (M-5-U54) in all tRNAs. This is Methylenetetrahydrofolate--tRNA-(uracil-5-)-methyltransferase TrmFO from Magnetococcus marinus (strain ATCC BAA-1437 / JCM 17883 / MC-1).